A 138-amino-acid chain; its full sequence is Acidic phospholipase A2 PePLA2 (138 aa).

Residues 1-16 form the signal peptide; that stretch reads MRTLWIMAVLLLGVEG. 7 disulfides stabilise this stretch: cysteine 42–cysteine 131, cysteine 44–cysteine 60, cysteine 59–cysteine 110, cysteine 65–cysteine 138, cysteine 66–cysteine 103, cysteine 73–cysteine 97, and cysteine 91–cysteine 101. Ca(2+) is bound by residues tyrosine 43, glycine 45, and glycine 47. Histidine 63 is an active-site residue. Aspartate 64 is a binding site for Ca(2+). Aspartate 104 is a catalytic residue.

This sequence belongs to the phospholipase A2 family. Group II subfamily. D49 sub-subfamily. The cofactor is Ca(2+). Expressed by the venom gland.

It localises to the secreted. It catalyses the reaction a 1,2-diacyl-sn-glycero-3-phosphocholine + H2O = a 1-acyl-sn-glycero-3-phosphocholine + a fatty acid + H(+). Its function is as follows. PLA2 catalyzes the calcium-dependent hydrolysis of the 2-acyl groups in 3-sn-phosphoglycerides. The protein is Acidic phospholipase A2 PePLA2 of Protobothrops elegans (Elegant pitviper).